Consider the following 308-residue polypeptide: Taste receptor type 2 member 41 (308 aa).

Topologically, residues 1–7 (MLPTLSV) are extracellular. A helical transmembrane segment spans residues 8-28 (FFMLTFVLLCFLGILANGFIV). Topologically, residues 29–60 (LMLSREWLLRGRLLPSDMILFSLGTSRFFQQC) are cytoplasmic. The helical transmembrane segment at 61–81 (VGLVNSFYYFLHLVEYSGSLA) threads the bilayer. At 82-88 (RQLISLH) the chain is on the extracellular side. The chain crosses the membrane as a helical span at residues 89 to 109 (WDFLNSATFWFCTWLSVLFCI). Residues 110 to 128 (KIANFSHPAFLWLKWRFPA) are Cytoplasmic-facing. The chain crosses the membrane as a helical span at residues 129–149 (LVPWFLLGSILVSVIVTLLFF). At 150 to 186 (WGNHTIYQAFLRRKFTGNTTFKEWNRRLEIDYFMPLK) the chain is on the extracellular side. N-linked (GlcNAc...) asparagine glycosylation is found at Asn152 and Asn167. A helical membrane pass occupies residues 187–207 (VVTMSIPCSLFLVSILLLISS). At 208-239 (LRRHSLRMQHNTHSLQDPNVQAHSRALKSLIS) the chain is on the cytoplasmic side. Residues 240–260 (FLVLYAVSFVSMIIDATVFIS) traverse the membrane as a helical segment. Over 261–264 (SDNV) the chain is Extracellular. Residues 265-285 (WYWPWQIILYFCMSVHPFILI) traverse the membrane as a helical segment. The Cytoplasmic segment spans residues 286–308 (TNNLRFRGTFRQLLLLARGFWVA).

The protein belongs to the G-protein coupled receptor T2R family. In terms of tissue distribution, expressed in subsets of taste receptor cells of the tongue and palate epithelium and exclusively in gustducin-positive cells.

It localises to the membrane. Functionally, receptor that may play a role in the perception of bitterness and is gustducin-linked. May play a role in sensing the chemical composition of the gastrointestinal content. The activity of this receptor may stimulate alpha gustducin, mediate PLC-beta-2 activation and lead to the gating of TRPM5. In Mus musculus (Mouse), this protein is Taste receptor type 2 member 41 (Tas2r41).